Here is a 240-residue protein sequence, read N- to C-terminus: Adapter protein MecA (240 aa).

Residues 118 to 138 are disordered; that stretch reads EQRAQQQKHSHKSEQKQTKQR.

It belongs to the MecA family. As to quaternary structure, homodimer.

Functionally, enables the recognition and targeting of unfolded and aggregated proteins to the ClpC protease or to other proteins involved in proteolysis. The chain is Adapter protein MecA from Staphylococcus haemolyticus (strain JCSC1435).